The following is a 524-amino-acid chain: GMP synthase [glutamine-hydrolyzing] (524 aa).

One can recognise a Glutamine amidotransferase type-1 domain in the interval 8 to 206 (KILILDFGSQ…VRKLCQCEAR (199 aa)). Cysteine 85 serves as the catalytic Nucleophile. Active-site residues include histidine 180 and glutamate 182. A GMPS ATP-PPase domain is found at 207–399 (WTTGNIVEDA…LGLPYEMVYR (193 aa)). 234 to 240 (SGGVDSS) contacts ATP.

In terms of assembly, homodimer.

The enzyme catalyses XMP + L-glutamine + ATP + H2O = GMP + L-glutamate + AMP + diphosphate + 2 H(+). Its pathway is purine metabolism; GMP biosynthesis; GMP from XMP (L-Gln route): step 1/1. Its function is as follows. Catalyzes the synthesis of GMP from XMP. The polypeptide is GMP synthase [glutamine-hydrolyzing] (Methylococcus capsulatus (strain ATCC 33009 / NCIMB 11132 / Bath)).